A 331-amino-acid polypeptide reads, in one-letter code: Homoserine kinase (331 aa).

Belongs to the pseudomonas-type ThrB family.

It carries out the reaction L-homoserine + ATP = O-phospho-L-homoserine + ADP + H(+). It functions in the pathway amino-acid biosynthesis; L-threonine biosynthesis; L-threonine from L-aspartate: step 4/5. The polypeptide is Homoserine kinase (Burkholderia thailandensis (strain ATCC 700388 / DSM 13276 / CCUG 48851 / CIP 106301 / E264)).